Here is a 61-residue protein sequence, read N- to C-terminus: MAKLKITQVRSKIGGNRKQHAALASLGLGRIGKSVIRDDRPEVRGQINVVAHLVTVEEVSS.

It belongs to the universal ribosomal protein uL30 family. In terms of assembly, part of the 50S ribosomal subunit.

This is Large ribosomal subunit protein uL30 from Thermobifida fusca (strain YX).